A 196-amino-acid polypeptide reads, in one-letter code: Ribosome maturation factor RimP (196 aa).

The tract at residues 164-196 is disordered; sequence LAPQKPNKPGPKKTGHEKKKPSNESAAGKPRAE. Over residues 173–182 the composition is skewed to basic residues; the sequence is GPKKTGHEKK.

Belongs to the RimP family.

Its subcellular location is the cytoplasm. Its function is as follows. Required for maturation of 30S ribosomal subunits. The sequence is that of Ribosome maturation factor RimP from Xanthomonas oryzae pv. oryzae (strain MAFF 311018).